A 493-amino-acid chain; its full sequence is Accumulates dyads protein 4 (493 aa).

In terms of assembly, interacts with CNM67, SPO21/MPC70 and NUD1.

Its subcellular location is the cytoplasm. It is found in the cytoskeleton. The protein resides in the microtubule organizing center. It localises to the spindle pole body. Its function is as follows. Involved in the pathway that organizes the shaping and sizing of the prospore membrane (PSM) during sporulation. May be required to stabilize the outer plaque of the spindle pole body (SPB). The chain is Accumulates dyads protein 4 (ADY4) from Saccharomyces cerevisiae (strain ATCC 204508 / S288c) (Baker's yeast).